The sequence spans 544 residues: Putative cysteine ligase BshC (544 aa).

A coiled-coil region spans residues 431–463 (LNDTCRTIKEEHEKFIQELSRLDEKIYDFEEKN).

It belongs to the BshC family.

Its function is as follows. Involved in bacillithiol (BSH) biosynthesis. May catalyze the last step of the pathway, the addition of cysteine to glucosamine malate (GlcN-Mal) to generate BSH. The chain is Putative cysteine ligase BshC from Natranaerobius thermophilus (strain ATCC BAA-1301 / DSM 18059 / JW/NM-WN-LF).